The sequence spans 309 residues: Probable manganese-dependent inorganic pyrophosphatase (309 aa).

Mn(2+)-binding residues include H9, D13, D15, D75, H97, and D149.

The protein belongs to the PPase class C family. It depends on Mn(2+) as a cofactor.

The protein resides in the cytoplasm. The enzyme catalyses diphosphate + H2O = 2 phosphate + H(+). The protein is Probable manganese-dependent inorganic pyrophosphatase of Staphylococcus epidermidis (strain ATCC 12228 / FDA PCI 1200).